The sequence spans 516 residues: Maturase K (516 aa).

Belongs to the intron maturase 2 family. MatK subfamily.

It localises to the plastid. Its subcellular location is the chloroplast. Functionally, usually encoded in the trnK tRNA gene intron. Probably assists in splicing its own and other chloroplast group II introns. The polypeptide is Maturase K (Cypripedium calceolus (Yellow lady's slipper)).